The sequence spans 248 residues: Ras-related protein RSR1 (248 aa).

10 to 17 (GAGGVGKS) contacts GTP. Positions 32 to 40 (YDPTIEDSY) match the Effector region motif. Residues 57–61 (DTAGV) and 116–119 (NKCD) contribute to the GTP site. Positions 182-248 (LQKQQQQQQQ…SSGSKFCTII (67 aa)) are disordered. The segment covering 184-214 (KQQQQQQQEQDAEGQQQQQKSGKSKSSATQK) has biased composition (low complexity). 2 stretches are compositionally biased toward polar residues: residues 219-231 (DGQT…LKQS) and 238-248 (SSSGSKFCTII). Cysteine 245 is modified (cysteine methyl ester). Cysteine 245 carries the S-geranylgeranyl cysteine lipid modification. A propeptide spans 246-248 (TII) (removed in mature form).

Belongs to the small GTPase superfamily. Ras family.

The protein localises to the cell membrane. The catalysed reaction is GTP + H2O = GDP + phosphate + H(+). With respect to regulation, alternates between an inactive form bound to GDP and an active form bound to GTP. Activated by a guanine nucleotide-exchange factor (GEF) and inactivated by a GTPase-activating protein (GAP). Ras-related protein which binds GDP/GTP and possesses intrinsic GTPase activity. Involved in both yeast and hypha development. In the yeast phase, it is required for normal (polar) bud site selection and is involved in cell morphogenesis; in the yeast-mycelial transition it is involved in germ tube emergence; and in the development of the hyphae it is involved in cell elongation. The chain is Ras-related protein RSR1 (RSR1) from Candida albicans (Yeast).